The sequence spans 313 residues: N-acetyl-gamma-glutamyl-phosphate reductase (313 aa).

The active site involves C117.

It belongs to the NAGSA dehydrogenase family. Type 2 subfamily.

The protein localises to the cytoplasm. It catalyses the reaction N-acetyl-L-glutamate 5-semialdehyde + phosphate + NADP(+) = N-acetyl-L-glutamyl 5-phosphate + NADPH + H(+). It participates in amino-acid biosynthesis; L-arginine biosynthesis; N(2)-acetyl-L-ornithine from L-glutamate: step 3/4. Functionally, catalyzes the NADPH-dependent reduction of N-acetyl-5-glutamyl phosphate to yield N-acetyl-L-glutamate 5-semialdehyde. This chain is N-acetyl-gamma-glutamyl-phosphate reductase, found in Burkholderia orbicola (strain MC0-3).